Reading from the N-terminus, the 63-residue chain is MKIFGLFLLIATYMALAFAGEDVCIPSGQKCGPYMNMGCCKGLVCMSYAARCVSMGGIPRMHI.

The N-terminal stretch at 1-19 (MKIFGLFLLIATYMALAFA) is a signal peptide. 3 cysteine pairs are disulfide-bonded: cysteine 24–cysteine 40, cysteine 31–cysteine 45, and cysteine 39–cysteine 52.

The protein belongs to the venom Ptu1-like knottin family. In terms of tissue distribution, expressed by the venom gland.

It is found in the secreted. Functionally, binds reversibly and blocks P/Q-type voltage-gated calcium channels (Cav). The polypeptide is U-reduvitoxin-Pr4a (Platymeris rhadamanthus (Red spot assassin bug)).